Here is a 712-residue protein sequence, read N- to C-terminus: Amine oxidase [copper-containing] gamma 1 (712 aa).

The first 24 residues, 1–24 (MAEPSFARLFLLFFSFLLIFATYS), serve as a signal peptide directing secretion. N-linked (GlcNAc...) asparagine glycans are attached at residues Asn-146 and Asn-173. Cys-188 and Cys-210 form a disulfide bridge. 352-363 (YMDAGELGLGPT) contributes to the substrate binding site. The Proton acceptor role is filled by Asp-354. A disulfide bond links Cys-373 and Cys-399. Substrate is bound at residue 439–444 (VGNYDY). The active-site Schiff-base intermediate with substrate; via topaquinone is Tyr-442. Tyr-442 carries the post-translational modification 2',4',5'-topaquinone. Cu cation contacts are provided by His-499 and His-501. Mn(2+) is bound by residues Asp-508, Met-509, and Asp-510. N-linked (GlcNAc...) asparagine glycans are attached at residues Asn-516 and Asn-617. Asp-651 and Ile-652 together coordinate Mn(2+). His-662 is a Cu cation binding site.

This sequence belongs to the copper/topaquinone oxidase family. As to quaternary structure, homodimer. Cu cation is required as a cofactor. Requires Zn(2+) as cofactor. L-topaquinone serves as cofactor. The cofactor is Mn(2+). Post-translationally, topaquinone (TPQ) is generated by copper-dependent autoxidation of a specific tyrosyl residue. As to expression, mostly expressed in roots, stems and flowers, and, at lower levels, in leaves and cotyledons.

The protein localises to the secreted. Its subcellular location is the extracellular space. The protein resides in the apoplast. It catalyses the reaction a primary methyl amine + O2 + H2O = an aldehyde + H2O2 + NH4(+). It functions in the pathway amine and polyamine degradation; putrescine degradation. Copper amine oxidase that can use putrescine and spermidine as substrates. Required for abscisic acid- (ABA) and polyamine- (PA) and H(2)O(2)-dependent induced nitric oxide (NO) biosynthesis. Involved in ABA signal transduction and in responses to osmotic stress. The polypeptide is Amine oxidase [copper-containing] gamma 1 (Arabidopsis thaliana (Mouse-ear cress)).